We begin with the raw amino-acid sequence, 671 residues long: Transcriptional regulator Kaiso (671 aa).

The segment at 1-103 (MESRKLISAT…RADLLDELIK (103 aa)) is interaction with NCOR1. The self-association stretch occupies residues 1–136 (MESRKLISAT…SGTEQDGTAE (136 aa)). A BTB domain is found at 32 to 94 (CDVTVIVEDR…IYSSKVVRVR (63 aa)). Polar residues predominate over residues 127–144 (SGTEQDGTAETLPSSSSD). Positions 127–161 (SGTEQDGTAETLPSSSSDKSLDMEKSKDEAQDNGA) are disordered. The segment covering 145 to 156 (KSLDMEKSKDEA) has biased composition (basic and acidic residues). Residues lysine 151 and lysine 153 each participate in a glycyl lysine isopeptide (Lys-Gly) (interchain with G-Cter in SUMO2) cross-link. Threonine 251 carries the phosphothreonine modification. The segment at 298–571 (LPNHMSSSVN…FMSSHIKSVH (274 aa)) is interaction with CBFA2T3. The interval 332 to 365 (IIDDDDDIISSSPDSAVSNTSLVPQADNSKSTTL) is disordered. Positions 347–365 (AVSNTSLVPQADNSKSTTL) are enriched in polar residues. Residues lysine 388, lysine 405, lysine 412, and lysine 447 each participate in a glycyl lysine isopeptide (Lys-Gly) (interchain with G-Cter in SUMO2) cross-link. The span at 451 to 461 (DGGEAKLDNEL) shows a compositional bias: basic and acidic residues. Positions 451–474 (DGGEAKLDNELPKTSGSEPPNKRM) are disordered. The segment at 452–671 (GGEAKLDNEL…EFEFIIPESY (220 aa)) is interaction with CTNND1. Residues lysine 463, lysine 472, and lysine 477 each participate in a glycyl lysine isopeptide (Lys-Gly) (interchain with G-Cter in SUMO2) cross-link. Positions 469 to 478 (PPNKRMKVKH) match the Nuclear localization signal motif. C2H2-type zinc fingers lie at residues 492 to 514 (YICI…FNIH), 520 to 542 (YQCR…EIHH), and 548 to 571 (YQCL…KSVH). The segment at 512–637 (NIHSWEKKYQ…TSTPPQNKST (126 aa)) is required for DNA-binding. Glycyl lysine isopeptide (Lys-Gly) (interchain with G-Cter in SUMO2) cross-links involve residues lysine 537, lysine 568, lysine 580, lysine 609, and lysine 616.

Interacts with NCOR1. Self-associates. Interacts with CTNND1, and this interaction inhibits binding to both methylated and non-methylated DNA. Interacts with CTNND2. Interacts with KPNA2/RCH1, which may mediate nuclear import of this protein. Interacts with CBFA2T3. As to expression, expressed in brain, heart, kidney, liver, lung, neuromuscular junctions, skeletal muscle, spleen and testis.

The protein resides in the nucleus. Functionally, transcriptional regulator with bimodal DNA-binding specificity. Binds to methylated CpG dinucleotides in the consensus sequence 5'-CGCG-3' and also binds to the non-methylated consensus sequence 5'-CTGCNA-3' also known as the consensus kaiso binding site (KBS). May recruit the N-CoR repressor complex to promote histone deacetylation and the formation of repressive chromatin structures in target gene promoters. Contributes to the repression of target genes of the Wnt signaling pathway. May also activate transcription of a subset of target genes by the recruitment of CTNND2. Represses expression of MMP7 in conjunction with transcriptional corepressors CBFA2T3, CBFA2T2 and RUNX1T1. The chain is Transcriptional regulator Kaiso (Zbtb33) from Mus musculus (Mouse).